The chain runs to 337 residues: Cholinesterase 2 (337 aa).

The active-site Acyl-ester intermediate is Ser99. Cys153 and Cys165 are oxidised to a cystine. Glu224 serves as the catalytic Charge relay system. A glycan (N-linked (GlcNAc...) asparagine) is linked at Asn290.

It belongs to the type-B carboxylesterase/lipase family.

The catalysed reaction is an acylcholine + H2O = a carboxylate + choline + H(+). This is Cholinesterase 2 (CHE2) from Branchiostoma lanceolatum (Common lancelet).